A 336-amino-acid chain; its full sequence is Holliday junction branch migration complex subunit RuvB (336 aa).

Positions 1–182 (MAKRMITTEL…FGVVHRLEFY (182 aa)) are large ATPase domain (RuvB-L). ATP-binding positions include Leu21, Arg22, Gly63, Lys66, Thr67, Thr68, 129-131 (EDY), Arg172, Tyr182, and Arg219. Thr67 contributes to the Mg(2+) binding site. Positions 183 to 253 (TTEELKEIIT…VARFALDILE (71 aa)) are small ATPAse domain (RuvB-S). Residues 256–336 (KLGLDHIDRQ…GLPYENKELS (81 aa)) form a head domain (RuvB-H) region. DNA is bound by residues Arg311 and Arg316.

The protein belongs to the RuvB family. In terms of assembly, homohexamer. Forms an RuvA(8)-RuvB(12)-Holliday junction (HJ) complex. HJ DNA is sandwiched between 2 RuvA tetramers; dsDNA enters through RuvA and exits via RuvB. An RuvB hexamer assembles on each DNA strand where it exits the tetramer. Each RuvB hexamer is contacted by two RuvA subunits (via domain III) on 2 adjacent RuvB subunits; this complex drives branch migration. In the full resolvosome a probable DNA-RuvA(4)-RuvB(12)-RuvC(2) complex forms which resolves the HJ.

The protein resides in the cytoplasm. It carries out the reaction ATP + H2O = ADP + phosphate + H(+). Functionally, the RuvA-RuvB-RuvC complex processes Holliday junction (HJ) DNA during genetic recombination and DNA repair, while the RuvA-RuvB complex plays an important role in the rescue of blocked DNA replication forks via replication fork reversal (RFR). RuvA specifically binds to HJ cruciform DNA, conferring on it an open structure. The RuvB hexamer acts as an ATP-dependent pump, pulling dsDNA into and through the RuvAB complex. RuvB forms 2 homohexamers on either side of HJ DNA bound by 1 or 2 RuvA tetramers; 4 subunits per hexamer contact DNA at a time. Coordinated motions by a converter formed by DNA-disengaged RuvB subunits stimulates ATP hydrolysis and nucleotide exchange. Immobilization of the converter enables RuvB to convert the ATP-contained energy into a lever motion, pulling 2 nucleotides of DNA out of the RuvA tetramer per ATP hydrolyzed, thus driving DNA branch migration. The RuvB motors rotate together with the DNA substrate, which together with the progressing nucleotide cycle form the mechanistic basis for DNA recombination by continuous HJ branch migration. Branch migration allows RuvC to scan DNA until it finds its consensus sequence, where it cleaves and resolves cruciform DNA. In Lachnoclostridium phytofermentans (strain ATCC 700394 / DSM 18823 / ISDg) (Clostridium phytofermentans), this protein is Holliday junction branch migration complex subunit RuvB.